A 154-amino-acid chain; its full sequence is Actin-related protein 2/3 complex subunit 5 (154 aa).

Residue threonine 142 is modified to Phosphothreonine.

The protein belongs to the ARPC5 family. As to quaternary structure, component of the Arp2/3 complex composed of ARP2, ARP3, ARC40/p41-ARC, ARC35/p34-ARC, ARC18/p21-ARC, ARC19/p20-ARC and ARC16/p16-ARC.

It is found in the cytoplasm. It localises to the cytoskeleton. Its subcellular location is the actin patch. Functions as a component of the Arp2/3 complex which is involved in regulation of actin polymerization and together with an activating nucleation-promoting factor (NPF) mediates the formation of branched actin networks. This chain is Actin-related protein 2/3 complex subunit 5 (ARC15), found in Saccharomyces cerevisiae (strain ATCC 204508 / S288c) (Baker's yeast).